A 532-amino-acid polypeptide reads, in one-letter code: Phosphoenolpyruvate carboxykinase (ATP) (532 aa).

Substrate is bound by residues arginine 60, tyrosine 195, and lysine 201. Residues lysine 201, histidine 221, and 237 to 245 (GLSGTGKTT) each bind ATP. Lysine 201 and histidine 221 together coordinate Mn(2+). Aspartate 258 is a Mn(2+) binding site. ATP is bound by residues glutamate 287, arginine 323, and threonine 448. Position 323 (arginine 323) interacts with substrate.

The protein belongs to the phosphoenolpyruvate carboxykinase (ATP) family. Requires Mn(2+) as cofactor.

It localises to the cytoplasm. It catalyses the reaction oxaloacetate + ATP = phosphoenolpyruvate + ADP + CO2. It functions in the pathway carbohydrate biosynthesis; gluconeogenesis. In terms of biological role, involved in the gluconeogenesis. Catalyzes the conversion of oxaloacetate (OAA) to phosphoenolpyruvate (PEP) through direct phosphoryl transfer between the nucleoside triphosphate and OAA. The chain is Phosphoenolpyruvate carboxykinase (ATP) from Christiangramia forsetii (strain DSM 17595 / CGMCC 1.15422 / KT0803) (Gramella forsetii).